The chain runs to 59 residues: Large ribosomal subunit protein uL30 (59 aa).

The protein belongs to the universal ribosomal protein uL30 family. In terms of assembly, part of the 50S ribosomal subunit.

The polypeptide is Large ribosomal subunit protein uL30 (Persephonella marina (strain DSM 14350 / EX-H1)).